The sequence spans 90 residues: Large ribosomal subunit protein eL37 (90 aa).

Positions 19, 22, 34, and 37 each coordinate Zn(2+). The C4-type zinc-finger motif lies at 19–37 (CRRCGRQSYHKQKNSCSSC). Over residues 21–31 (RCGRQSYHKQK) the composition is skewed to basic residues. A disordered region spans residues 21–59 (RCGRQSYHKQKNSCSSCGYPNPKMRNPGSIKARRRRTIG).

This sequence belongs to the eukaryotic ribosomal protein eL37 family. It depends on Zn(2+) as a cofactor.

In terms of biological role, binds to the 23S rRNA. This is Large ribosomal subunit protein eL37 (RPL37) from Encephalitozoon cuniculi (strain GB-M1) (Microsporidian parasite).